A 168-amino-acid chain; its full sequence is uncharacterized protein (168 aa).

The region spanning 19-80 is the HTH asnC-type domain; that stretch reads LDKLDRHILN…VVSPKAVGRT (62 aa). A DNA-binding region (H-T-H motif) is located at residues 38–57; sequence LKELSEKVNSSVATCQRRVQ.

This is an uncharacterized protein from Haemophilus influenzae (strain ATCC 51907 / DSM 11121 / KW20 / Rd).